A 403-amino-acid polypeptide reads, in one-letter code: MTDAASLADRVREGDLRLHELEAHADADTAAEARRLLVESQSGASLDAVGNYGFPAEAAESAIENMVGSIQVPMGVAGPVSVDGGSVAGEKYLPLATTEGALLASVNRGCSVINSAGGATARVLKSGMTRAPVFRVADVAEAEALVSWTRDNFAALKEAAEETTNHGELLDVTPYVVGNSVYLRFRYDTKDAMGMNMATIATEAVCGVVEAETAASLVALSGNLCSDKKPAAINAVEGRGRSVTADVRIPREVVEERLHTTPEAVAELNTRKNLVGSAKAASLGFNAHVANVVAAMFLATGQDEAQVVEGANAITTAEVQDGDLYVSVSIASLEVGTVGGGTKLPTQSEGLDILGVSGGGDPAGSNADALAECIAVGSLAGELSLLSALASRHLSSAHAELGR.

Residues E99 and D303 each act as charge relay system in the active site. The active-site Proton donor is H398.

Belongs to the HMG-CoA reductase family.

It catalyses the reaction (R)-mevalonate + 2 NADP(+) + CoA = (3S)-3-hydroxy-3-methylglutaryl-CoA + 2 NADPH + 2 H(+). The protein operates within metabolic intermediate biosynthesis; (R)-mevalonate biosynthesis; (R)-mevalonate from acetyl-CoA: step 3/3. With respect to regulation, is competitively inhibited by (R)-HMG-CoA and lovastatin (formerly called mevinolin). Its function is as follows. Catalyzes the NADPH-dependent reductive deacylation of (S)-3-hydroxy-3-methylglutaryl-CoA (HMG-CoA) to (R)-mevalonate. Functions in the mevalonate (MVA) pathway leading to isopentenyl diphosphate (IPP), a key precursor for the biosynthesis of isoprenoid compounds such as archaeal membrane lipids. Is also able to catalyze the reduction of mevaldehyde to mevalonate and the oxidative acylation of mevaldehyde to HMG-CoA. This is 3-hydroxy-3-methylglutaryl-coenzyme A reductase (hmgA) from Haloferax volcanii (strain ATCC 29605 / DSM 3757 / JCM 8879 / NBRC 14742 / NCIMB 2012 / VKM B-1768 / DS2) (Halobacterium volcanii).